Here is an 831-residue protein sequence, read N- to C-terminus: Leucine--tRNA ligase (831 aa).

Residues 35-45 (PYPSGKIHVGH) carry the 'HIGH' region motif. The 'KMSKS' region signature appears at 600-604 (KMSKS). Lys-603 lines the ATP pocket.

It belongs to the class-I aminoacyl-tRNA synthetase family.

Its subcellular location is the cytoplasm. The enzyme catalyses tRNA(Leu) + L-leucine + ATP = L-leucyl-tRNA(Leu) + AMP + diphosphate. This chain is Leucine--tRNA ligase, found in Rickettsia bellii (strain RML369-C).